We begin with the raw amino-acid sequence, 86 residues long: Progonadoliberin IIB (86 aa).

Residues 1-24 (MVHICRLFVVMGMLMFLSVQFASS) form the signal peptide. At Q25 the chain carries Pyrrolidone carboxylic acid. A Glycine amide modification is found at G34.

This sequence belongs to the GnRH family. As to expression, olfactory bulbs, hypothalamus and telencephalon, midbrain and posterior brain areas.

The protein localises to the secreted. Its function is as follows. Stimulates the secretion of gonadotropins. This chain is Progonadoliberin IIB (gnrh2b), found in Carassius auratus (Goldfish).